The sequence spans 213 residues: Protein-L-isoaspartate O-methyltransferase (213 aa).

Residue Ser-61 is part of the active site.

It belongs to the methyltransferase superfamily. L-isoaspartyl/D-aspartyl protein methyltransferase family.

The protein resides in the cytoplasm. It carries out the reaction [protein]-L-isoaspartate + S-adenosyl-L-methionine = [protein]-L-isoaspartate alpha-methyl ester + S-adenosyl-L-homocysteine. Its function is as follows. Catalyzes the methyl esterification of L-isoaspartyl residues in peptides and proteins that result from spontaneous decomposition of normal L-aspartyl and L-asparaginyl residues. It plays a role in the repair and/or degradation of damaged proteins. The polypeptide is Protein-L-isoaspartate O-methyltransferase (Maricaulis maris (strain MCS10) (Caulobacter maris)).